A 217-amino-acid polypeptide reads, in one-letter code: MFVHNEVNLRLEKKQFLRSYGRRRGRNFRENKLVGLERFLASHEKLENLKSEIVLEVGFGFGEHILKKAIDYPDKVFVGAEVYVNGIARLLEQVELHELSNVLIWNDDVRLLLEKLLCKVFHKVYILFPDPWPKRRHHKRRIVDVPFFQLLSRSLHPLAEVVVATDDHDYAQQIYQSALEVFSKVENTEIPKNASRFASKASNRIFGYKMVYDATDA.

Residues glutamate 56, glutamate 81, aspartate 108, and aspartate 130 each contribute to the S-adenosyl-L-methionine site. Aspartate 130 is an active-site residue. 2 residues coordinate substrate: lysine 134 and aspartate 166.

This sequence belongs to the class I-like SAM-binding methyltransferase superfamily. TrmB family.

The enzyme catalyses guanosine(46) in tRNA + S-adenosyl-L-methionine = N(7)-methylguanosine(46) in tRNA + S-adenosyl-L-homocysteine. Its pathway is tRNA modification; N(7)-methylguanine-tRNA biosynthesis. Catalyzes the formation of N(7)-methylguanine at position 46 (m7G46) in tRNA. The chain is tRNA (guanine-N(7)-)-methyltransferase from Neorickettsia sennetsu (strain ATCC VR-367 / Miyayama) (Ehrlichia sennetsu).